The primary structure comprises 421 residues: Expansin-like protein DDB_G0293186 (421 aa).

The signal sequence occupies residues 1–20 (MRTLKLIILLILSTFKTINS). Asn19 is a glycosylation site (N-linked (GlcNAc...) asparagine). The region spanning 43–139 (GGQCGLPLPG…QKVSCGFSGY (97 aa)) is the Expansin-like EG45 domain. 2 disulfides stabilise this stretch: Cys46–Cys70 and Cys73–Cys134. Asn117 and Asn391 each carry an N-linked (GlcNAc...) asparagine glycan.

Belongs to the expansin family. Expansin A subfamily.

Its subcellular location is the secreted. In terms of biological role, may serve to lubricate the movement of the cellulose microfibrils during cell growth and wall extension and/or may serve to maintain the fluid state of the slug cell wall. This Dictyostelium discoideum (Social amoeba) protein is Expansin-like protein DDB_G0293186.